The chain runs to 92 residues: Small ribosomal subunit protein bS20 (92 aa).

Disordered stretches follow at residues 1–25 (MALR…NRAK) and 68–92 (HKNA…AQQA). A compositionally biased stretch (low complexity) spans 80 to 92 (AKAINKAKAAQQA).

This sequence belongs to the bacterial ribosomal protein bS20 family.

In terms of biological role, binds directly to 16S ribosomal RNA. This Deinococcus radiodurans (strain ATCC 13939 / DSM 20539 / JCM 16871 / CCUG 27074 / LMG 4051 / NBRC 15346 / NCIMB 9279 / VKM B-1422 / R1) protein is Small ribosomal subunit protein bS20.